Here is a 116-residue protein sequence, read N- to C-terminus: Flagellar transcriptional regulator FlhD (116 aa).

It belongs to the FlhD family. Homodimer; disulfide-linked. Forms a heterohexamer composed of two FlhC and four FlhD subunits. Each FlhC binds a FlhD dimer, forming a heterotrimer, and a hexamer assembles by dimerization of two heterotrimers.

The protein localises to the cytoplasm. Functions in complex with FlhC as a master transcriptional regulator that regulates transcription of several flagellar and non-flagellar operons by binding to their promoter region. Activates expression of class 2 flagellar genes, including fliA, which is a flagellum-specific sigma factor that turns on the class 3 genes. Also regulates genes whose products function in a variety of physiological pathways. This chain is Flagellar transcriptional regulator FlhD, found in Yersinia pseudotuberculosis serotype O:1b (strain IP 31758).